Consider the following 213-residue polypeptide: Phospho-2-dehydro-3-deoxyheptonate aldolase, Tyr-sensitive (213 aa).

The protein belongs to the class-I DAHP synthase family.

It carries out the reaction D-erythrose 4-phosphate + phosphoenolpyruvate + H2O = 7-phospho-2-dehydro-3-deoxy-D-arabino-heptonate + phosphate. It participates in metabolic intermediate biosynthesis; chorismate biosynthesis; chorismate from D-erythrose 4-phosphate and phosphoenolpyruvate: step 1/7. Stereospecific condensation of phosphoenolpyruvate (PEP) and D-erythrose-4-phosphate (E4P) giving rise to 3-deoxy-D-arabino-heptulosonate-7-phosphate (DAHP). The polypeptide is Phospho-2-dehydro-3-deoxyheptonate aldolase, Tyr-sensitive (aroF) (Enterobacter agglomerans (Erwinia herbicola)).